The chain runs to 196 residues: Carnitine operon protein CaiE (196 aa).

Residues 173–196 are disordered; that stretch reads TQPLRQMEENRPRLQGTTDVTPKR. The segment covering 187 to 196 has biased composition (polar residues); that stretch reads QGTTDVTPKR.

Belongs to the transferase hexapeptide repeat family.

Its pathway is amine and polyamine metabolism; carnitine metabolism. Overproduction of CaiE stimulates the activity of CaiB and CaiD. The sequence is that of Carnitine operon protein CaiE from Escherichia coli O139:H28 (strain E24377A / ETEC).